The sequence spans 1080 residues: Presequence protease 1, chloroplastic/mitochondrial (1080 aa).

Residues methionine 1 to alanine 85 constitute a chloroplast and mitochondrion transit peptide. Valine 86 carries the post-translational modification N-acetylvaline. Histidine 162 is a Zn(2+) binding site. Glutamate 165 (proton acceptor) is an active-site residue. Histidine 166 provides a ligand contact to Zn(2+). Glutamate 240 is an active-site residue. Residue glutamate 262 coordinates Zn(2+). A coiled-coil region spans residues glutamate 571–threonine 612. Arginine 705 contributes to the Mg(2+) binding site.

The protein belongs to the peptidase M16 family. PreP subfamily. As to quaternary structure, homodimer. Zn(2+) is required as a cofactor. The cofactor is Mg(2+). Expressed only in siliques and flowers.

The protein localises to the plastid. Its subcellular location is the chloroplast stroma. The protein resides in the mitochondrion matrix. Inactive in the absence of MgCl(2) and CaCl(2) and full activation at 10 mM concentrations of either ion. Completely inhibited by the metal chelator orthophenanthroline, but not affected by phenylmethylsulfonyl fluoride (PMSF) or N-ethylmaleimide (NEM). ATP-independent protease that degrades both mitochondrial and chloroplastic transit peptides after their cleavage. Also degrades other unstructured peptides. Specific for peptides in the range of 10 to 65 residues. Shows a preference for cleavage after small polar residues and before basic residues, with a bias for positively charged amino acid residues. The sequence is that of Presequence protease 1, chloroplastic/mitochondrial (PREP1) from Arabidopsis thaliana (Mouse-ear cress).